The following is a 123-amino-acid chain: UPF0102 protein CLM_2733 (123 aa).

It belongs to the UPF0102 family.

This Clostridium botulinum (strain Kyoto / Type A2) protein is UPF0102 protein CLM_2733.